The primary structure comprises 217 residues: Ras-related protein Rab-39A (217 aa).

Positions 17, 20, 21, 22, 23, and 44 each coordinate GTP. S22 provides a ligand contact to Mg(2+). The switch-I stretch occupies residues P39 to V47. Mg(2+) is bound by residues T44 and D68. GTP contacts are provided by G71, H127, K128, D130, A158, and K159. Residues G71–V87 are switch-II. 2 S-geranylgeranyl cysteine lipidation sites follow: C215 and C217. Position 217 is a cysteine methyl ester (C217).

The protein belongs to the small GTPase superfamily. Rab family. As to quaternary structure, interacts (GDP-bound) with C9orf72; C9orf72 acts as a GEF for RAB39A. Interacts (GTP-bound) with HOPS complex components VPS39 and VPS41, and STX17; interaction between HOPS components and RAB39A contributes to obtaining a functional HOPS complex that promotes membrane fusion driven by STX17-SNAP29-VAMP8. Interacts with BECN1. Probably associates with the PI3K (PI3KC3/PI3K-III/class III phosphatidylinositol 3-kinase) complex. Interacts with UACA. Interacts with isoform a of RASSF1. Does not interact with isoform c of RASSF1. Requires Mg(2+) as cofactor. In terms of processing, prenylated. Prenylation is required for association with cellular membranes.

The protein resides in the cell membrane. It is found in the cytoplasmic vesicle. It localises to the phagosome membrane. Its subcellular location is the lysosome membrane. The protein localises to the autolysosome membrane. It catalyses the reaction GTP + H2O = GDP + phosphate + H(+). With respect to regulation, regulated by guanine nucleotide exchange factors (GEFs) including c9Orf72, which promote the exchange of bound GDP for free GTP. Regulated by GTPase activating proteins (GAPs) which increase the GTP hydrolysis activity. Inhibited by GDP dissociation inhibitors (GDIs). Its function is as follows. The small GTPases Rab are key regulators of intracellular membrane trafficking, from the formation of transport vesicles to their fusion with membranes. Rabs cycle between an inactive GDP-bound form and an active GTP-bound form that is able to recruit to membranes different sets of downstream effectors directly responsible for vesicle formation, movement, tethering and fusion. RAB39A regulates autophagosome-lysosome fusion via recruitment of the HOPS endosomal tethering complex onto lysosomes; this process involves lysosomal RAB39A and autophagosomal RAB2A recruitment of HOPS subcomplexes VPS41-VPS16-VPS18-VPS33A and VPS39-VPS11, respectively, which assemble into a functional complex to mediate membrane tethering and SNAREs-driven membrane fusion. Also negatively regulates lipopolysaccharide (LPS)-induced autophagosome formation in macrophages, possibly by implicating PI3K. Promotes the delivery of MHC-I molecules from the ER to phagosomes and the generation of peptide-loaded MHC-I complexes in phagosomes, thus enhancing antigen cross-presentation by dendritic cells. Plays a role in the maturation and acidification of phagosomes that engulf pathogens, such as S.aureus and M.tuberculosis. Plays a role in the fusion of phagosomes with lysosomes. May be involved in multiple neurite formation. The chain is Ras-related protein Rab-39A from Homo sapiens (Human).